We begin with the raw amino-acid sequence, 334 residues long: Chitinase 9 (334 aa).

An N-terminal signal peptide occupies residues 1–23; it reads MKATTTAVALLVAAAAMAAQVVA. One can recognise a Chitin-binding type-1 domain in the interval 24–64; the sequence is EQCGSQAGGALCPNCLCCSSYGWCGSTSDYCGDGCQSQCDG. Intrachain disulfides connect Cys-26/Cys-41, Cys-35/Cys-47, Cys-38/Cys-65, Cys-40/Cys-54, Cys-58/Cys-62, Cys-107/Cys-169, Cys-181/Cys-189, and Cys-288/Cys-320. The active-site Proton donor is the Glu-151.

Belongs to the glycosyl hydrolase 19 family. Chitinase class I subfamily. Expressed at high levels in roots, sheaths and meristems.

It catalyses the reaction Random endo-hydrolysis of N-acetyl-beta-D-glucosaminide (1-&gt;4)-beta-linkages in chitin and chitodextrins.. In terms of biological role, may play a role in defense against fungal pathogens containing chitin. This is Chitinase 9 (Cht9) from Oryza sativa subsp. japonica (Rice).